Consider the following 432-residue polypeptide: 5'-deoxyadenosine deaminase (432 aa).

The Zn(2+) site is built by His-63 and His-65. Substrate contacts are provided by Glu-92 and His-184. His-211 serves as a coordination point for Zn(2+). The substrate site is built by Glu-214 and Asp-299. Asp-299 contributes to the Zn(2+) binding site.

This sequence belongs to the metallo-dependent hydrolases superfamily. MTA/SAH deaminase family. In terms of assembly, homotetramer. Requires Zn(2+) as cofactor.

The enzyme catalyses 5'-deoxyadenosine + H2O + H(+) = 5'-deoxyinosine + NH4(+). It catalyses the reaction S-adenosyl-L-homocysteine + H2O + H(+) = S-inosyl-L-homocysteine + NH4(+). The catalysed reaction is S-methyl-5'-thioadenosine + H2O + H(+) = S-methyl-5'-thioinosine + NH4(+). It carries out the reaction adenosine + H2O + H(+) = inosine + NH4(+). It functions in the pathway amino-acid biosynthesis; S-adenosyl-L-methionine biosynthesis. Its function is as follows. Catalyzes the deamination of three SAM-derived enzymatic products, namely 5'-deoxyadenosine, S-adenosyl-L-homocysteine, and 5'-methylthioadenosine, to produce the inosine analogs. Can also deaminate adenosine. The preferred substrate for this enzyme is 5'-deoxyadenosine, but all these substrates are efficiently deaminated. Likely functions in a S-adenosyl-L-methionine (SAM) recycling pathway from S-adenosyl-L-homocysteine (SAH) produced from SAM-dependent methylation reactions. May also be involved in the recycling of 5'-deoxyadenosine, whereupon the 5'-deoxyribose moiety of 5'-deoxyinosine is further metabolized to deoxyhexoses used for the biosynthesis of aromatic amino acids in methanogens. The sequence is that of 5'-deoxyadenosine deaminase from Methanosarcina mazei (strain ATCC BAA-159 / DSM 3647 / Goe1 / Go1 / JCM 11833 / OCM 88) (Methanosarcina frisia).